We begin with the raw amino-acid sequence, 383 residues long: Succinyl-diaminopimelate desuccinylase (383 aa).

A Zn(2+)-binding site is contributed by His-74. Residue Asp-76 is part of the active site. A Zn(2+)-binding site is contributed by Asp-107. The active-site Proton acceptor is the Glu-141. The Zn(2+) site is built by Glu-142, Glu-170, and His-356.

This sequence belongs to the peptidase M20A family. DapE subfamily. In terms of assembly, homodimer. The cofactor is Zn(2+). Requires Co(2+) as cofactor.

It catalyses the reaction N-succinyl-(2S,6S)-2,6-diaminopimelate + H2O = (2S,6S)-2,6-diaminopimelate + succinate. The protein operates within amino-acid biosynthesis; L-lysine biosynthesis via DAP pathway; LL-2,6-diaminopimelate from (S)-tetrahydrodipicolinate (succinylase route): step 3/3. Catalyzes the hydrolysis of N-succinyl-L,L-diaminopimelic acid (SDAP), forming succinate and LL-2,6-diaminopimelate (DAP), an intermediate involved in the bacterial biosynthesis of lysine and meso-diaminopimelic acid, an essential component of bacterial cell walls. This Cupriavidus necator (strain ATCC 17699 / DSM 428 / KCTC 22496 / NCIMB 10442 / H16 / Stanier 337) (Ralstonia eutropha) protein is Succinyl-diaminopimelate desuccinylase.